The chain runs to 95 residues: Aspartyl/glutamyl-tRNA(Asn/Gln) amidotransferase subunit C (95 aa).

Belongs to the GatC family. As to quaternary structure, heterotrimer of A, B and C subunits.

The enzyme catalyses L-glutamyl-tRNA(Gln) + L-glutamine + ATP + H2O = L-glutaminyl-tRNA(Gln) + L-glutamate + ADP + phosphate + H(+). It catalyses the reaction L-aspartyl-tRNA(Asn) + L-glutamine + ATP + H2O = L-asparaginyl-tRNA(Asn) + L-glutamate + ADP + phosphate + 2 H(+). Its function is as follows. Allows the formation of correctly charged Asn-tRNA(Asn) or Gln-tRNA(Gln) through the transamidation of misacylated Asp-tRNA(Asn) or Glu-tRNA(Gln) in organisms which lack either or both of asparaginyl-tRNA or glutaminyl-tRNA synthetases. The reaction takes place in the presence of glutamine and ATP through an activated phospho-Asp-tRNA(Asn) or phospho-Glu-tRNA(Gln). The polypeptide is Aspartyl/glutamyl-tRNA(Asn/Gln) amidotransferase subunit C (Lysinibacillus sphaericus (strain C3-41)).